The chain runs to 117 residues: Ribonuclease P protein component (117 aa).

Belongs to the RnpA family. In terms of assembly, consists of a catalytic RNA component (M1 or rnpB) and a protein subunit.

It carries out the reaction Endonucleolytic cleavage of RNA, removing 5'-extranucleotides from tRNA precursor.. RNaseP catalyzes the removal of the 5'-leader sequence from pre-tRNA to produce the mature 5'-terminus. It can also cleave other RNA substrates such as 4.5S RNA. The protein component plays an auxiliary but essential role in vivo by binding to the 5'-leader sequence and broadening the substrate specificity of the ribozyme. The chain is Ribonuclease P protein component from Lactococcus lactis subsp. cremoris (strain MG1363).